We begin with the raw amino-acid sequence, 247 residues long: NAD(P)H-quinone oxidoreductase subunit K (247 aa).

The [4Fe-4S] cluster site is built by Cys-63, Cys-64, Cys-128, and Cys-159.

It belongs to the complex I 20 kDa subunit family. In terms of assembly, NDH-1 can be composed of about 15 different subunits; different subcomplexes with different compositions have been identified which probably have different functions. It depends on [4Fe-4S] cluster as a cofactor.

It localises to the cellular thylakoid membrane. The catalysed reaction is a plastoquinone + NADH + (n+1) H(+)(in) = a plastoquinol + NAD(+) + n H(+)(out). The enzyme catalyses a plastoquinone + NADPH + (n+1) H(+)(in) = a plastoquinol + NADP(+) + n H(+)(out). Functionally, NDH-1 shuttles electrons from an unknown electron donor, via FMN and iron-sulfur (Fe-S) centers, to quinones in the respiratory and/or the photosynthetic chain. The immediate electron acceptor for the enzyme in this species is believed to be plastoquinone. Couples the redox reaction to proton translocation, and thus conserves the redox energy in a proton gradient. Cyanobacterial NDH-1 also plays a role in inorganic carbon-concentration. The polypeptide is NAD(P)H-quinone oxidoreductase subunit K (Gloeothece citriformis (strain PCC 7424) (Cyanothece sp. (strain PCC 7424))).